The primary structure comprises 306 residues: MQLNQVIVVHKAGDRQSKEWADRASRQLQQRGANVLVGPSGPKDNPYPVFMASVTEPIDLAVVLGGDGTSLAAARHLAAAGVPILAVNVGGHLGFLTEPLELFRDMEAVWDRLERDEYAMQQRMMLQAQVFEGSKAHPEAVGDRYYALNEMCIKPASADRMITAILEMEIDGDVVDQYQGDGLLVATPTGSTCYTVAANGPILHPGMEALVVTPICPLSLSSRPIVLPARSSVSIWPLEDHSLNTKLWMDGVLATSIWPGQRVQVTMADCQARFIILRDHYSFYQTLREKLAWAGARIPYHNNHRN.

Asp-67 acts as the Proton acceptor in catalysis. Residues Asp-67–Gly-68, Asn-149–Glu-150, and Asp-181 contribute to the NAD(+) site.

The protein belongs to the NAD kinase family. Requires a divalent metal cation as cofactor.

It is found in the cytoplasm. It catalyses the reaction NAD(+) + ATP = ADP + NADP(+) + H(+). Involved in the regulation of the intracellular balance of NAD and NADP, and is a key enzyme in the biosynthesis of NADP. Catalyzes specifically the phosphorylation on 2'-hydroxyl of the adenosine moiety of NAD to yield NADP. This chain is NAD kinase 1, found in Thermosynechococcus vestitus (strain NIES-2133 / IAM M-273 / BP-1).